We begin with the raw amino-acid sequence, 97 residues long: Cell division topological specificity factor (97 aa).

The protein belongs to the MinE family.

Functionally, prevents the cell division inhibition by proteins MinC and MinD at internal division sites while permitting inhibition at polar sites. This ensures cell division at the proper site by restricting the formation of a division septum at the midpoint of the long axis of the cell. The protein is Cell division topological specificity factor of Synechococcus sp. (strain RCC307).